The chain runs to 251 residues: tRNA (guanine-N(7)-)-methyltransferase (251 aa).

The tract at residues 1–43 (MQPNEQPGTGPADTTLEQQDTAAAEVGHPRRIRSFVRRAGRTS) is disordered. The segment covering 29 to 40 (PRRIRSFVRRAG) has biased composition (basic residues). S-adenosyl-L-methionine contacts are provided by Glu82, Glu107, Asp134, and Asp157. Asp157 is a catalytic residue. Residue Lys161 coordinates substrate. The segment at 163-168 (RHNKRR) is interaction with RNA. Substrate is bound by residues Asp193 and 228–231 (TKFE).

This sequence belongs to the class I-like SAM-binding methyltransferase superfamily. TrmB family.

It catalyses the reaction guanosine(46) in tRNA + S-adenosyl-L-methionine = N(7)-methylguanosine(46) in tRNA + S-adenosyl-L-homocysteine. The protein operates within tRNA modification; N(7)-methylguanine-tRNA biosynthesis. Catalyzes the formation of N(7)-methylguanine at position 46 (m7G46) in tRNA. The protein is tRNA (guanine-N(7)-)-methyltransferase of Ralstonia nicotianae (strain ATCC BAA-1114 / GMI1000) (Ralstonia solanacearum).